The sequence spans 127 residues: Large ribosomal subunit protein bL20 (127 aa).

Belongs to the bacterial ribosomal protein bL20 family.

Its function is as follows. Binds directly to 23S ribosomal RNA and is necessary for the in vitro assembly process of the 50S ribosomal subunit. It is not involved in the protein synthesizing functions of that subunit. The chain is Large ribosomal subunit protein bL20 from Bifidobacterium longum (strain DJO10A).